The sequence spans 209 residues: Type III pantothenate kinase (209 aa).

5–12 is a binding site for ATP; the sequence is DIGNSNAN. Substrate is bound by residues Y68 and 72-75; that span reads GIDR. D74 functions as the Proton acceptor in the catalytic mechanism. Position 89 (D89) interacts with K(+). An ATP-binding site is contributed by S92. T144 lines the substrate pocket.

This sequence belongs to the type III pantothenate kinase family. Homodimer. It depends on NH4(+) as a cofactor. K(+) is required as a cofactor.

It is found in the cytoplasm. The enzyme catalyses (R)-pantothenate + ATP = (R)-4'-phosphopantothenate + ADP + H(+). Its pathway is cofactor biosynthesis; coenzyme A biosynthesis; CoA from (R)-pantothenate: step 1/5. Its function is as follows. Catalyzes the phosphorylation of pantothenate (Pan), the first step in CoA biosynthesis. The chain is Type III pantothenate kinase from Campylobacter jejuni (strain RM1221).